Here is a 458-residue protein sequence, read N- to C-terminus: MEFDTIAAISTALGEGAIAIVRVSGDDAIEKVDRIFKGKDLTQVSSHTIHYGHIVDLDTNQVIEEVMVSIMRAPRTFTRENIVEINCHGGLVSVNKVLQLILAQGVRLAEPGEFTKRAFLNGRIDLSQAEAVMDLIRAKTDRAMNVAINQMEGRLSKLIGHLRQEILETLAHIEVNIDYPEYDDVEEMTHNILIEKATHVRAEIAKILETSKQGKILREGISTAIIGRPNVGKSSLLNSLVQEKKAIVTDIAGTTRDVIEEYVNVRGVPLKLIDTAGIRETEDIVERIGVERSKEMMSQADLVLIVVNYSEALTNEDEDLFRAVQGKDFIVIVNKTDLPQEIDMERVTDLAVGNRVITTSLIEEQGIDELEKAIADLFFEGTIDSADMTYVSNARHIGLLTQAGRTINDAIEAIENGVPIDMVQIDLTRAWEILGEITGDTVHESLIDQLFSQFCLGK.

Positions 22, 84, and 123 each coordinate (6S)-5-formyl-5,6,7,8-tetrahydrofolate. One can recognise a TrmE-type G domain in the interval 220–379; the sequence is GISTAIIGRP…LEKAIADLFF (160 aa). Residue N230 coordinates K(+). GTP is bound by residues 230–235, 249–255, and 274–277; these read NVGKSS, TDIAGTT, and DTAG. S234 is a binding site for Mg(2+). T249, I251, and T254 together coordinate K(+). T255 lines the Mg(2+) pocket. K458 contacts (6S)-5-formyl-5,6,7,8-tetrahydrofolate.

Belongs to the TRAFAC class TrmE-Era-EngA-EngB-Septin-like GTPase superfamily. TrmE GTPase family. As to quaternary structure, homodimer. Heterotetramer of two MnmE and two MnmG subunits. It depends on K(+) as a cofactor.

The protein localises to the cytoplasm. In terms of biological role, exhibits a very high intrinsic GTPase hydrolysis rate. Involved in the addition of a carboxymethylaminomethyl (cmnm) group at the wobble position (U34) of certain tRNAs, forming tRNA-cmnm(5)s(2)U34. This chain is tRNA modification GTPase MnmE, found in Bacillus mycoides (strain KBAB4) (Bacillus weihenstephanensis).